A 155-amino-acid polypeptide reads, in one-letter code: Putative pre-16S rRNA nuclease (155 aa).

Belongs to the YqgF nuclease family.

Its subcellular location is the cytoplasm. Could be a nuclease involved in processing of the 5'-end of pre-16S rRNA. This chain is Putative pre-16S rRNA nuclease, found in Xylella fastidiosa (strain M23).